A 132-amino-acid chain; its full sequence is uncharacterized protein (132 aa).

The tract at residues 17 to 75 (RSAVPRWPHLSSQSGVEPPDRWTGTPGWPSRDQEAPGSMMPPAAAQPSAHGALVPPATA) is disordered. Residues 51–65 (APGSMMPPAAAQPSA) are compositionally biased toward low complexity.

As to expression, expressed exclusively in heart.

The protein resides in the cytoplasm. This is an uncharacterized protein from Homo sapiens (Human).